Here is a 293-residue protein sequence, read N- to C-terminus: Probable endonuclease 4 (293 aa).

Residues H77, H118, E153, D187, H190, H221, D234, H236, and E266 each coordinate Zn(2+).

Belongs to the AP endonuclease 2 family. Zn(2+) serves as cofactor.

The enzyme catalyses Endonucleolytic cleavage to 5'-phosphooligonucleotide end-products.. Its function is as follows. Endonuclease IV plays a role in DNA repair. It cleaves phosphodiester bonds at apurinic or apyrimidinic (AP) sites, generating a 3'-hydroxyl group and a 5'-terminal sugar phosphate. The protein is Probable endonuclease 4 of Mesoplasma florum (strain ATCC 33453 / NBRC 100688 / NCTC 11704 / L1) (Acholeplasma florum).